The primary structure comprises 274 residues: Dermonecrotic toxin SdSicTox-betaIIB1ai (274 aa).

His5 is an active-site residue. Residues Glu25 and Asp27 each coordinate Mg(2+). The Nucleophile role is filled by His41. Intrachain disulfides connect Cys45/Cys51 and Cys47/Cys190. Asp85 is a Mg(2+) binding site.

The protein belongs to the arthropod phospholipase D family. Class II subfamily. Mg(2+) serves as cofactor. In terms of tissue distribution, expressed by the venom gland.

The protein localises to the secreted. The enzyme catalyses an N-(acyl)-sphingosylphosphocholine = an N-(acyl)-sphingosyl-1,3-cyclic phosphate + choline. The catalysed reaction is an N-(acyl)-sphingosylphosphoethanolamine = an N-(acyl)-sphingosyl-1,3-cyclic phosphate + ethanolamine. It catalyses the reaction a 1-acyl-sn-glycero-3-phosphocholine = a 1-acyl-sn-glycero-2,3-cyclic phosphate + choline. It carries out the reaction a 1-acyl-sn-glycero-3-phosphoethanolamine = a 1-acyl-sn-glycero-2,3-cyclic phosphate + ethanolamine. In terms of biological role, dermonecrotic toxins cleave the phosphodiester linkage between the phosphate and headgroup of certain phospholipids (sphingolipid and lysolipid substrates), forming an alcohol (often choline) and a cyclic phosphate. This toxin acts on sphingomyelin (SM). It may also act on ceramide phosphoethanolamine (CPE), lysophosphatidylcholine (LPC) and lysophosphatidylethanolamine (LPE), but not on lysophosphatidylserine (LPS), and lysophosphatidylglycerol (LPG). It acts by transphosphatidylation, releasing exclusively cyclic phosphate products as second products. Induces dermonecrosis, hemolysis, increased vascular permeability, edema, inflammatory response, and platelet aggregation. The protein is Dermonecrotic toxin SdSicTox-betaIIB1ai of Sicarius cf. damarensis (strain GJB-2008) (Six-eyed sand spider).